A 183-amino-acid chain; its full sequence is Lipocalin (183 aa).

Residues 1–20 form the signal peptide; it reads MKGLVLSFALVALSALCVYG. Residues Cys-83 and Cys-179 are joined by a disulfide bond.

The protein belongs to the calycin superfamily. Lipocalin family. As to quaternary structure, monomer. Expressed mainly in choroid plexus. Much lower expression in other brain areas, and absent from liver.

The protein localises to the secreted. Might have a transport function across the blood brain barrier. Is supposed to have similar functions as a transthyretin which must have evolved after the stage of the amphibians in evolution. This chain is Lipocalin, found in Rhinella marina (Cane toad).